The sequence spans 1096 residues: Phospholipase D zeta 1 (1096 aa).

Position 2 is an N-acetylalanine (alanine 2). The region spanning 50–204 (PKAVIVSVSR…REVCRFLEVS (155 aa)) is the PX domain. Residues 131 to 152 (VQDEDADEVPLHQDESAKNRDV) are disordered. A compositionally biased stretch (basic and acidic residues) spans 139–151 (VPLHQDESAKNRD). The PH domain maps to 234–342 (DDSNRCCGCC…WVASINDAAL (109 aa)). The region spanning 477-504 (YLWSHHEKLVIVDNQVCFIGGLDLCFGR) is the PLD phosphodiesterase 1 domain. Catalysis depends on residues histidine 482, lysine 484, and aspartate 489. A compositionally biased stretch (basic and acidic residues) spans 607–632 (GRQEESDIESKKEEDSIRGIRRDDSF). The tract at residues 607–691 (GRQEESDIES…DGDTPMRGFV (85 aa)) is disordered. The region spanning 892–919 (SQVYVHSKIMIVDDRAALIGSANINDRS) is the PLD phosphodiesterase 2 domain. Active-site residues include histidine 897, lysine 899, and aspartate 904.

The protein belongs to the phospholipase D family. PXPH-PLD subfamily. Does not require Ca(2+) or any other cation for activity. serves as cofactor. Expressed in inflorescences, flowers, siliques, stems, leaves, and roots. Highest expression in roots.

Its subcellular location is the cytoplasmic vesicle. The catalysed reaction is a 1,2-diacyl-sn-glycero-3-phosphocholine + H2O = a 1,2-diacyl-sn-glycero-3-phosphate + choline + H(+). With respect to regulation, calcium-independent and PIP2-dependent. Hydrolyzes glycerol-phospholipids at the terminal phosphodiesteric bond to generate phosphatidic acids (PA). Phosphatidylcholine-selective. Regulates root-hair morphogenesis. Contributes to the supply of inorganic phosphorus for cell metabolism and diacylglycerol moieties for galactolipid synthesis in phosphorus-starved roots. Involved in root elongation during phosphate limitation. This Arabidopsis thaliana (Mouse-ear cress) protein is Phospholipase D zeta 1.